A 43-amino-acid chain; its full sequence is uncharacterized protein (43 aa).

A signal peptide spans 1 to 17; sequence MYRRLLLNLFCMVFLQA.

This is an uncharacterized protein from Helicobacter pylori (strain J99 / ATCC 700824) (Campylobacter pylori J99).